A 166-amino-acid chain; its full sequence is Phosphopantetheine adenylyltransferase (166 aa).

Position 11 (Thr-11) interacts with substrate. ATP contacts are provided by residues 11-12 (TF) and His-19. Substrate contacts are provided by Lys-43, Thr-79, and Arg-93. ATP contacts are provided by residues Glu-104 and 128-134 (LEPLNST).

The protein belongs to the bacterial CoaD family. Homohexamer. The cofactor is Mg(2+).

The protein localises to the cytoplasm. The enzyme catalyses (R)-4'-phosphopantetheine + ATP + H(+) = 3'-dephospho-CoA + diphosphate. Its pathway is cofactor biosynthesis; coenzyme A biosynthesis; CoA from (R)-pantothenate: step 4/5. Functionally, reversibly transfers an adenylyl group from ATP to 4'-phosphopantetheine, yielding dephospho-CoA (dPCoA) and pyrophosphate. This Lactococcus lactis subsp. cremoris (strain MG1363) protein is Phosphopantetheine adenylyltransferase.